We begin with the raw amino-acid sequence, 337 residues long: S-adenosylmethionine:tRNA ribosyltransferase-isomerase (337 aa).

The protein belongs to the QueA family. Monomer.

It is found in the cytoplasm. It catalyses the reaction 7-aminomethyl-7-carbaguanosine(34) in tRNA + S-adenosyl-L-methionine = epoxyqueuosine(34) in tRNA + adenine + L-methionine + 2 H(+). It participates in tRNA modification; tRNA-queuosine biosynthesis. Transfers and isomerizes the ribose moiety from AdoMet to the 7-aminomethyl group of 7-deazaguanine (preQ1-tRNA) to give epoxyqueuosine (oQ-tRNA). The polypeptide is S-adenosylmethionine:tRNA ribosyltransferase-isomerase (Legionella pneumophila (strain Paris)).